Reading from the N-terminus, the 220-residue chain is Serine protease-like protein 51 (220 aa).

The signal sequence occupies residues 1 to 16 (MFQLLIPLLLALKGHA). Residues 23-220 (VQCGHRPAFP…SSKWVSSVGA (198 aa)) enclose the Peptidase S1 domain. An N-linked (GlcNAc...) asparagine glycan is attached at N33. An intrachain disulfide couples C64 to C80. N92 carries N-linked (GlcNAc...) asparagine glycosylation. Cysteines 157 and 170 form a disulfide.

The protein belongs to the peptidase S1 family.

Its subcellular location is the secreted. In Homo sapiens (Human), this protein is Serine protease-like protein 51.